A 238-amino-acid chain; its full sequence is Ribonuclease PH (238 aa).

Phosphate contacts are provided by residues arginine 86 and 124–126 (GTR).

It belongs to the RNase PH family. As to quaternary structure, homohexameric ring arranged as a trimer of dimers.

It carries out the reaction tRNA(n+1) + phosphate = tRNA(n) + a ribonucleoside 5'-diphosphate. Its function is as follows. Phosphorolytic 3'-5' exoribonuclease that plays an important role in tRNA 3'-end maturation. Removes nucleotide residues following the 3'-CCA terminus of tRNAs; can also add nucleotides to the ends of RNA molecules by using nucleoside diphosphates as substrates, but this may not be physiologically important. Probably plays a role in initiation of 16S rRNA degradation (leading to ribosome degradation) during starvation. This chain is Ribonuclease PH, found in Halorhodospira halophila (strain DSM 244 / SL1) (Ectothiorhodospira halophila (strain DSM 244 / SL1)).